We begin with the raw amino-acid sequence, 127 residues long: S-adenosylmethionine decarboxylase proenzyme (127 aa).

The active-site Schiff-base intermediate with substrate; via pyruvic acid is serine 63. Serine 63 carries the post-translational modification Pyruvic acid (Ser); by autocatalysis. The active-site Proton acceptor; for processing activity is the histidine 68. Catalysis depends on cysteine 83, which acts as the Proton donor; for catalytic activity.

This sequence belongs to the prokaryotic AdoMetDC family. Type 1 subfamily. Heterotetramer of two alpha and two beta chains arranged as a dimer of alpha/beta heterodimers. It depends on pyruvate as a cofactor. Is synthesized initially as an inactive proenzyme. Formation of the active enzyme involves a self-maturation process in which the active site pyruvoyl group is generated from an internal serine residue via an autocatalytic post-translational modification. Two non-identical subunits are generated from the proenzyme in this reaction, and the pyruvate is formed at the N-terminus of the alpha chain, which is derived from the carboxyl end of the proenzyme. The post-translation cleavage follows an unusual pathway, termed non-hydrolytic serinolysis, in which the side chain hydroxyl group of the serine supplies its oxygen atom to form the C-terminus of the beta chain, while the remainder of the serine residue undergoes an oxidative deamination to produce ammonia and the pyruvoyl group blocking the N-terminus of the alpha chain.

The enzyme catalyses S-adenosyl-L-methionine + H(+) = S-adenosyl 3-(methylsulfanyl)propylamine + CO2. Its pathway is amine and polyamine biosynthesis; S-adenosylmethioninamine biosynthesis; S-adenosylmethioninamine from S-adenosyl-L-methionine: step 1/1. Functionally, catalyzes the decarboxylation of S-adenosylmethionine to S-adenosylmethioninamine (dcAdoMet), the propylamine donor required for the synthesis of the polyamines spermine and spermidine from the diamine putrescine. The polypeptide is S-adenosylmethionine decarboxylase proenzyme (Carboxydothermus hydrogenoformans (strain ATCC BAA-161 / DSM 6008 / Z-2901)).